An 86-amino-acid polypeptide reads, in one-letter code: MPKRVLTGTVVSDKTDKTVVVKVERRVKHALYGKIIKRSKKYHAHDETNEYREGETVRIEETAPMSKLKTWKVIERVDTHATPNHA.

Belongs to the universal ribosomal protein uS17 family. In terms of assembly, part of the 30S ribosomal subunit.

In terms of biological role, one of the primary rRNA binding proteins, it binds specifically to the 5'-end of 16S ribosomal RNA. This Rhizorhabdus wittichii (strain DSM 6014 / CCUG 31198 / JCM 15750 / NBRC 105917 / EY 4224 / RW1) (Sphingomonas wittichii) protein is Small ribosomal subunit protein uS17.